We begin with the raw amino-acid sequence, 90 residues long: Large ribosomal subunit protein eL31 (90 aa).

The protein belongs to the eukaryotic ribosomal protein eL31 family.

This Thermococcus gammatolerans (strain DSM 15229 / JCM 11827 / EJ3) protein is Large ribosomal subunit protein eL31.